Reading from the N-terminus, the 309-residue chain is Ornithine carbamoyltransferase (309 aa).

Carbamoyl phosphate is bound by residues serine 57–threonine 60, glutamine 84, arginine 108, and histidine 135–glutamine 138. L-ornithine-binding positions include asparagine 166, aspartate 226, and serine 230 to methionine 231. Residues cysteine 265–leucine 266 and arginine 293 each bind carbamoyl phosphate.

This sequence belongs to the aspartate/ornithine carbamoyltransferase superfamily. OTCase family.

Its subcellular location is the cytoplasm. It carries out the reaction carbamoyl phosphate + L-ornithine = L-citrulline + phosphate + H(+). It functions in the pathway amino-acid biosynthesis; L-arginine biosynthesis; L-arginine from L-ornithine and carbamoyl phosphate: step 1/3. Its function is as follows. Reversibly catalyzes the transfer of the carbamoyl group from carbamoyl phosphate (CP) to the N(epsilon) atom of ornithine (ORN) to produce L-citrulline. The polypeptide is Ornithine carbamoyltransferase (Rhizorhabdus wittichii (strain DSM 6014 / CCUG 31198 / JCM 15750 / NBRC 105917 / EY 4224 / RW1) (Sphingomonas wittichii)).